The primary structure comprises 261 residues: Cytochrome c oxidase subunit 3 (261 aa).

Topologically, residues 1–15 are mitochondrial matrix; it reads MTHQTHAYHMVNPSP. The helical transmembrane segment at 16 to 34 threads the bilayer; that stretch reads WPLTGALSALLMTSGLIMW. Over 35–40 the chain is Mitochondrial intermembrane; it reads FHFNST. Residues 41–66 traverse the membrane as a helical segment; that stretch reads TLLMLGLTTNMLTMYQWWRDVVREST. Residues 67–72 lie on the Mitochondrial matrix side of the membrane; sequence FQGHHT. A helical membrane pass occupies residues 73–105; the sequence is PNVQKGLRYGMILFIISEVLFFTGFFWAFYHSS. Residues 106-128 are Mitochondrial intermembrane-facing; that stretch reads LAPTPELGGCWPPTGINPLNPLE. A helical transmembrane segment spans residues 129–152; the sequence is VPLLNTSVLLASGVSITWAHHSLM. Topologically, residues 153–155 are mitochondrial matrix; that stretch reads EGN. The chain crosses the membrane as a helical span at residues 156–183; the sequence is RNHMLQALFITIALGVYFTLLQASEYYE. The Mitochondrial intermembrane segment spans residues 184–190; it reads APFTISD. The chain crosses the membrane as a helical span at residues 191 to 223; that stretch reads GVYGSTFFVATGFHGLHVIIGSTFLIVCFFRQL. Topologically, residues 224 to 232 are mitochondrial matrix; sequence KFHFTSNHH. Residues 233-256 traverse the membrane as a helical segment; it reads FGFEAAAWYWHFVDVVWLFLYVSI. Residues 257 to 261 lie on the Mitochondrial intermembrane side of the membrane; sequence YWWGS.

Belongs to the cytochrome c oxidase subunit 3 family. In terms of assembly, component of the cytochrome c oxidase (complex IV, CIV), a multisubunit enzyme composed of 14 subunits. The complex is composed of a catalytic core of 3 subunits MT-CO1, MT-CO2 and MT-CO3, encoded in the mitochondrial DNA, and 11 supernumerary subunits COX4I, COX5A, COX5B, COX6A, COX6B, COX6C, COX7A, COX7B, COX7C, COX8 and NDUFA4, which are encoded in the nuclear genome. The complex exists as a monomer or a dimer and forms supercomplexes (SCs) in the inner mitochondrial membrane with NADH-ubiquinone oxidoreductase (complex I, CI) and ubiquinol-cytochrome c oxidoreductase (cytochrome b-c1 complex, complex III, CIII), resulting in different assemblies (supercomplex SCI(1)III(2)IV(1) and megacomplex MCI(2)III(2)IV(2)).

The protein resides in the mitochondrion inner membrane. It catalyses the reaction 4 Fe(II)-[cytochrome c] + O2 + 8 H(+)(in) = 4 Fe(III)-[cytochrome c] + 2 H2O + 4 H(+)(out). Functionally, component of the cytochrome c oxidase, the last enzyme in the mitochondrial electron transport chain which drives oxidative phosphorylation. The respiratory chain contains 3 multisubunit complexes succinate dehydrogenase (complex II, CII), ubiquinol-cytochrome c oxidoreductase (cytochrome b-c1 complex, complex III, CIII) and cytochrome c oxidase (complex IV, CIV), that cooperate to transfer electrons derived from NADH and succinate to molecular oxygen, creating an electrochemical gradient over the inner membrane that drives transmembrane transport and the ATP synthase. Cytochrome c oxidase is the component of the respiratory chain that catalyzes the reduction of oxygen to water. Electrons originating from reduced cytochrome c in the intermembrane space (IMS) are transferred via the dinuclear copper A center (CU(A)) of subunit 2 and heme A of subunit 1 to the active site in subunit 1, a binuclear center (BNC) formed by heme A3 and copper B (CU(B)). The BNC reduces molecular oxygen to 2 water molecules using 4 electrons from cytochrome c in the IMS and 4 protons from the mitochondrial matrix. The polypeptide is Cytochrome c oxidase subunit 3 (MT-CO3) (Gazella leptoceros (Sand gazelle)).